The primary structure comprises 140 residues: Small ribosomal subunit protein uS19 (140 aa).

The protein belongs to the universal ribosomal protein uS19 family.

Its function is as follows. Protein S19 forms a complex with S13 that binds strongly to the 16S ribosomal RNA. The polypeptide is Small ribosomal subunit protein uS19 (Metallosphaera sedula (strain ATCC 51363 / DSM 5348 / JCM 9185 / NBRC 15509 / TH2)).